The following is a 96-amino-acid chain: Aspartyl/glutamyl-tRNA(Asn/Gln) amidotransferase subunit C (96 aa).

The interval 64–96 (REDEPEPGLPREEVLKNAPDQQDGQFRVPAILE) is disordered.

Belongs to the GatC family. As to quaternary structure, heterotrimer of A, B and C subunits.

The catalysed reaction is L-glutamyl-tRNA(Gln) + L-glutamine + ATP + H2O = L-glutaminyl-tRNA(Gln) + L-glutamate + ADP + phosphate + H(+). The enzyme catalyses L-aspartyl-tRNA(Asn) + L-glutamine + ATP + H2O = L-asparaginyl-tRNA(Asn) + L-glutamate + ADP + phosphate + 2 H(+). Its function is as follows. Allows the formation of correctly charged Asn-tRNA(Asn) or Gln-tRNA(Gln) through the transamidation of misacylated Asp-tRNA(Asn) or Glu-tRNA(Gln) in organisms which lack either or both of asparaginyl-tRNA or glutaminyl-tRNA synthetases. The reaction takes place in the presence of glutamine and ATP through an activated phospho-Asp-tRNA(Asn) or phospho-Glu-tRNA(Gln). This Geobacillus thermodenitrificans (strain NG80-2) protein is Aspartyl/glutamyl-tRNA(Asn/Gln) amidotransferase subunit C.